The chain runs to 393 residues: Pyrimidine monooxygenase RutA (393 aa).

FMN contacts are provided by residues 79–80, asparagine 145, glutamate 154, 170–171, and serine 220; these read IK and RY.

This sequence belongs to the NtaA/SnaA/DszA monooxygenase family. RutA subfamily.

It catalyses the reaction uracil + FMNH2 + NADH + O2 = (Z)-3-ureidoacrylate + FMN + NAD(+) + H2O + H(+). The enzyme catalyses thymine + FMNH2 + NADH + O2 = (Z)-2-methylureidoacrylate + FMN + NAD(+) + H2O + H(+). Functionally, catalyzes the pyrimidine ring opening between N-3 and C-4 by an unusual flavin hydroperoxide-catalyzed mechanism, adding oxygen atoms in the process to yield ureidoacrylate peracid, that immediately reacts with FMN forming ureidoacrylate and FMN-N(5)-oxide. The FMN-N(5)-oxide reacts spontaneously with NADH to produce FMN. Requires the flavin reductase RutF to regenerate FMN in vivo. This Escherichia coli O18:K1:H7 (strain IHE3034 / ExPEC) protein is Pyrimidine monooxygenase RutA.